The primary structure comprises 147 residues: uncharacterized protein (147 aa).

The disordered stretch occupies residues Pro29–His147. Polar residues-rich tracts occupy residues Ser34 to Asn45 and Pro60 to Ser73. The span at Pro75–Asn92 shows a compositional bias: gly residues. Residues Asp122–His147 show a composition bias toward basic residues.

This is an uncharacterized protein from Caenorhabditis elegans.